The primary structure comprises 207 residues: High frequency lysogenization protein HflD homolog (207 aa).

It belongs to the HflD family.

The protein resides in the cytoplasm. It localises to the cell inner membrane. This is High frequency lysogenization protein HflD homolog from Methylococcus capsulatus (strain ATCC 33009 / NCIMB 11132 / Bath).